A 472-amino-acid polypeptide reads, in one-letter code: Nucleoporin NUP49/NSP49 (472 aa).

The stretch at 2-3 (FG) is one FG 1 repeat. Residues 14 to 17 (GLFG) form a GLFG 1 repeat. The tract at residues 28–104 (NTGFSFGGTQ…TANTGGGLFG (77 aa)) is disordered. One copy of the FG 2 repeat lies at 33-34 (FG). One copy of the GLFG 2 repeat lies at 48–51 (GLFG). Residues 64-80 (SFGQQQQQSQTNAFGGS) show a composition bias toward low complexity. FG repeat units lie at residues 65–66 (FG) and 77–78 (FG). GLFG repeat units follow at residues 86-89 (GLFG) and 101-104 (GLFG). Residues 113–116 (SLFG) form an SLFG 1 repeat. 2 GLFG repeats span residues 125–128 (GLFG) and 148–151 (GLFG). Residues 159–162 (SLFG) form an SLFG 2 repeat. One copy of the GLFG 7; approximate repeat lies at 175 to 178 (GMFG). The stretch at 185 to 188 (SLFG) is one SLFG 3 repeat. Residues 199 to 202 (GLFG) form a GLFG 8 repeat. Residues 210-213 (SLFG) form an SLFG 4 repeat. Positions 211–242 (LFGSSNNNNNNNNSNNIMSASGGLFGNQQQQL) are disordered. Residues 214 to 226 (SSNNNNNNNNSNN) are compositionally biased toward low complexity. Residues 233–236 (GLFG) form a GLFG 9 repeat.

It belongs to the nucleoporin GLFG family. As to quaternary structure, component of the nuclear pore complex (NPC). NPC constitutes the exclusive means of nucleocytoplasmic transport. NPCs allow the passive diffusion of ions and small molecules and the active, nuclear transport receptor-mediated bidirectional transport of macromolecules such as proteins, RNAs, ribonucleoparticles (RNPs), and ribosomal subunits across the nuclear envelope. Due to its 8-fold rotational symmetry, all subunits are present with 8 copies or multiples thereof. NUP49 is part of the NUP57 subcomplex (NIC96, NSP1, NUP49, NUP57) interacting with NUP57. Interacts through its FG repeats with karyopherins.

It is found in the nucleus. It localises to the nuclear pore complex. Its subcellular location is the nucleus membrane. In terms of biological role, functions as a component of the nuclear pore complex (NPC). NPC components, collectively referred to as nucleoporins (NUPs), can play the role of both NPC structural components and of docking or interaction partners for transiently associated nuclear transport factors. Active directional transport is assured by both, a Phe-Gly (FG) repeat affinity gradient for these transport factors across the NPC and a transport cofactor concentration gradient across the nuclear envelope (GSP1 and GSP2 GTPases associated predominantly with GTP in the nucleus, with GDP in the cytoplasm). NUP49 plays an important role in several nuclear transport pathways including poly(A)+ RNA, tRNA, and pre-ribosome transport. This is Nucleoporin NUP49/NSP49 (NUP49) from Saccharomyces cerevisiae (strain ATCC 204508 / S288c) (Baker's yeast).